The primary structure comprises 540 residues: Protein PALS2 (540 aa).

L27 domains follow at residues 1-48 and 49-107; these read MQQV…EDSK and LEAV…YDSP. One can recognise a PDZ domain in the interval 130–209; that stretch reads ILGIHKRAGE…SVTLKILPSY (80 aa). Positions 215–284 constitute an SH3 domain; that stretch reads PQQVFVKCHF…PSQFLEEKRK (70 aa). A Guanylate kinase-like domain is found at 338 to 525; the sequence is RKTLVLIGAQ…AFEKLQTAIE (188 aa). Tyrosine 500 is modified (phosphotyrosine).

Belongs to the MAGUK family. As to quaternary structure, interacts with CADM1. Interacts with the LIN7 proteins. As to expression, abundant in testis, brain, and kidney with lower levels detectable in other tissues.

It is found in the membrane. This Homo sapiens (Human) protein is Protein PALS2.